Reading from the N-terminus, the 412-residue chain is MSAQDDIDTGASNQPRSVVETDQQRAAVVGPRPPRHGEAECTDAIPARDSYQRYDTEVVDVPSMRPPVLPPSRANTLSKQQPRGDLSQSSASSHLPGLRQFTRLAPANMQGKDRSGLLSDRPSGLLLSDHTPNSQHAHRSAPQRDDNGRQSAASNRLSDTNSSAPSPGSTENERVRMHDQRTAPSAPPPLLSDLPRHSTDNKTYRLIIRQQPKQGRLCGLGSKDKRPLDPLPILQLRIIRPDGTEDEDAENSSNLVLQVSLCKEDPITGGYTDAVLVETNDPSYPWTRMLEGRIVASANLARDLDGSRACFFVFTDLSIRQEGQFRLAFKLLALSPPGQVPASAGGHVLTEALTEPFTIYSPRRFPGMTESTDLAKCLARQGIQVPVRNDIRKKQEHLDSLTASTDDMNGLE.

The disordered stretch occupies residues 1 to 197 (MSAQDDIDTG…PPLLSDLPRH (197 aa)). 2 stretches are compositionally biased toward polar residues: residues 73 to 93 (RANT…SASS) and 149 to 170 (RQSA…PGST). The segment covering 171-181 (ENERVRMHDQR) has biased composition (basic and acidic residues). Residues 195–388 (PRHSTDNKTY…ARQGIQVPVR (194 aa)) form the Velvet domain.

The protein belongs to the velvet family. VelC subfamily.

The protein localises to the nucleus. Velvet-domain-containing protein not required for disease or sexual development on seedlings. This is Sexual development regulator umv3 from Mycosarcoma maydis (Corn smut fungus).